A 582-amino-acid polypeptide reads, in one-letter code: uncharacterized protein (582 aa).

Residues 1 to 23 (MAHEGSRQVRDRGVTRSKAEKVR) are compositionally biased toward basic and acidic residues. 3 disordered regions span residues 1 to 29 (MAHE…TVPV), 110 to 133 (AVAE…SWAQ), and 147 to 221 (LENF…SSAG). Position 242 is a phosphoserine (Ser-242). 2 disordered regions span residues 310 to 331 (RPSA…SAHH) and 551 to 582 (LSSG…PKPR). Over residues 311 to 320 (PSASCQQQRA) the composition is skewed to polar residues.

This is an uncharacterized protein from Homo sapiens (Human).